We begin with the raw amino-acid sequence, 179 residues long: Large ribosomal subunit protein uL5 (179 aa).

This sequence belongs to the universal ribosomal protein uL5 family. In terms of assembly, part of the 50S ribosomal subunit; part of the 5S rRNA/L5/L18/L25 subcomplex. Contacts the 5S rRNA and the P site tRNA. Forms a bridge to the 30S subunit in the 70S ribosome.

Its function is as follows. This is one of the proteins that bind and probably mediate the attachment of the 5S RNA into the large ribosomal subunit, where it forms part of the central protuberance. In the 70S ribosome it contacts protein S13 of the 30S subunit (bridge B1b), connecting the 2 subunits; this bridge is implicated in subunit movement. Contacts the P site tRNA; the 5S rRNA and some of its associated proteins might help stabilize positioning of ribosome-bound tRNAs. In Clostridium perfringens (strain ATCC 13124 / DSM 756 / JCM 1290 / NCIMB 6125 / NCTC 8237 / Type A), this protein is Large ribosomal subunit protein uL5.